A 103-amino-acid chain; its full sequence is Large ribosomal subunit protein bL21 (103 aa).

This sequence belongs to the bacterial ribosomal protein bL21 family. In terms of assembly, part of the 50S ribosomal subunit. Contacts protein L20.

This protein binds to 23S rRNA in the presence of protein L20. The protein is Large ribosomal subunit protein bL21 of Beijerinckia indica subsp. indica (strain ATCC 9039 / DSM 1715 / NCIMB 8712).